The following is a 650-amino-acid chain: Serine/threonine-protein kinase oca2 (650 aa).

Polar residues predominate over residues 1 to 14; that stretch reads MSVTPPNVQFNLNG. Disordered regions lie at residues 1–210 and 222–288; these read MSVT…PHDI and HHGK…KSSA. S72 carries the post-translational modification Phosphoserine. The span at 78-98 shows a compositional bias: basic and acidic residues; it reads NHIDPKLAEDRYRSSAARHFE. A compositionally biased stretch (polar residues) spans 140 to 154; that stretch reads PSGSTGYTSPALSQN. 2 stretches are compositionally biased toward basic residues: residues 222-231 and 245-257; these read HHGKHGHHGH and HDKH…HEKH. Residues 258 to 279 show a composition bias toward basic and acidic residues; sequence HSSLDLRRFFKSHQKTDKEKKP. Position 286 is a phosphoserine (S286). Residues 302-614 enclose the Protein kinase domain; that stretch reads GKFGRMLGSG…IHRVFADNWI (313 aa). Residues 308 to 316 and K331 contribute to the ATP site; that span reads LGSGAGGSV. The active-site Proton acceptor is the D425. Positions 549–570 are disordered; that stretch reads PIRKTDESHSPNSKTDNSSTHK.

Belongs to the protein kinase superfamily. Ser/Thr protein kinase family.

The protein localises to the cytoplasm. The catalysed reaction is L-seryl-[protein] + ATP = O-phospho-L-seryl-[protein] + ADP + H(+). It catalyses the reaction L-threonyl-[protein] + ATP = O-phospho-L-threonyl-[protein] + ADP + H(+). In terms of biological role, overexpression causes cell cycle arrest. In Schizosaccharomyces pombe (strain 972 / ATCC 24843) (Fission yeast), this protein is Serine/threonine-protein kinase oca2.